We begin with the raw amino-acid sequence, 309 residues long: DDRGK domain-containing protein 1 (309 aa).

The Lumenal segment spans residues 1–2 (MD). Residues 3–23 (LIILVGIASALLVVILTIFFL) form a helical membrane-spanning segment. Residues 24–309 (QKKKGGTEAK…VSAGAGEGSS (286 aa)) lie on the Cytoplasmic side of the membrane. The disordered stretch occupies residues 30 to 178 (TEAKEAAAPP…RLVKEERERK (149 aa)). Over residues 53-84 (RRAQIARNQRNRLRQNAPAAAPAAAAALQAAD) the composition is skewed to low complexity. A compositionally biased stretch (acidic residues) spans 85 to 95 (AEGDNDDENPD). The span at 107 to 178 (LDEKMGAKKR…RLVKEERERK (72 aa)) shows a compositional bias: basic and acidic residues.

Belongs to the DDRGK1 family. Interacts with Atg9; the interaction is transient.

It is found in the endoplasmic reticulum membrane. Its function is as follows. Substrate adapter for ufmylation, the covalent attachment of the ubiquitin-like modifier UFM1 to substrate proteins. Required for ufmylation of Atg9; protects the nervous system during aging, possibly by stabilizing Atg9 and supporting its function. The sequence is that of DDRGK domain-containing protein 1 from Drosophila persimilis (Fruit fly).